The chain runs to 534 residues: 5'-nucleotidase domain-containing protein 3 (534 aa).

Asp-104 functions as the Nucleophile in the catalytic mechanism. 2 residues coordinate Mg(2+): Asp-104 and Asp-106. Asp-106 serves as the catalytic Proton donor. 234-242 (KEAIRDVHV) serves as a coordination point for substrate. Asp-372 serves as a coordination point for Mg(2+).

It belongs to the 5'(3')-deoxyribonucleotidase family. Mg(2+) serves as cofactor.

The chain is 5'-nucleotidase domain-containing protein 3 (nt5dc3) from Xenopus tropicalis (Western clawed frog).